Here is a 203-residue protein sequence, read N- to C-terminus: Small ribosomal subunit protein uS10m (203 aa).

The N-terminal 14 residues, 1–14, are a transit peptide targeting the mitochondrion; that stretch reads MLRNTIALRSFIRT. Ser-193 carries the post-translational modification Phosphoserine.

It belongs to the universal ribosomal protein uS10 family. In terms of assembly, component of the mitochondrial small ribosomal subunit (mt-SSU). Mature yeast 74S mitochondrial ribosomes consist of a small (37S) and a large (54S) subunit. The 37S small subunit contains a 15S ribosomal RNA (15S mt-rRNA) and 34 different proteins. The 54S large subunit contains a 21S rRNA (21S mt-rRNA) and 46 different proteins.

It is found in the mitochondrion. Component of the mitochondrial ribosome (mitoribosome), a dedicated translation machinery responsible for the synthesis of mitochondrial genome-encoded proteins, including at least some of the essential transmembrane subunits of the mitochondrial respiratory chain. The mitoribosomes are attached to the mitochondrial inner membrane and translation products are cotranslationally integrated into the membrane. The sequence is that of Small ribosomal subunit protein uS10m (RSM10) from Saccharomyces cerevisiae (strain ATCC 204508 / S288c) (Baker's yeast).